The following is a 119-amino-acid chain: Large ribosomal subunit protein uL22 (119 aa).

Belongs to the universal ribosomal protein uL22 family. In terms of assembly, part of the 50S ribosomal subunit.

In terms of biological role, this protein binds specifically to 23S rRNA; its binding is stimulated by other ribosomal proteins, e.g. L4, L17, and L20. It is important during the early stages of 50S assembly. It makes multiple contacts with different domains of the 23S rRNA in the assembled 50S subunit and ribosome. Its function is as follows. The globular domain of the protein is located near the polypeptide exit tunnel on the outside of the subunit, while an extended beta-hairpin is found that lines the wall of the exit tunnel in the center of the 70S ribosome. The protein is Large ribosomal subunit protein uL22 of Pelodictyon phaeoclathratiforme (strain DSM 5477 / BU-1).